A 216-amino-acid chain; its full sequence is MSSIEWRVSEGLTDYEYARSEMTKRVADIANQEASEMLWFLQHPPLYTAGSSADRRELLMPDRFPVYPAERGGRYTYHGPGQRIGYLMMDIRKHGNDIRRFVHSIEKWVIESLAEFGVTAYSHPERIGIWVDTPDGEAKIGAIGIRVRRWISFHGFSLNICPDLEHFSGIIPCGISEFGVTSLHALGKKVSMSDVDQALADRFPYFLEALQSKEAF.

The BPL/LPL catalytic domain occupies 32–211 (QEASEMLWFL…RFPYFLEALQ (180 aa)). Residues 71 to 78 (RGGRYTYH), 142 to 144 (AIG), and 155 to 157 (GFS) contribute to the substrate site. Cys173 serves as the catalytic Acyl-thioester intermediate.

Belongs to the LipB family.

The protein resides in the cytoplasm. It carries out the reaction octanoyl-[ACP] + L-lysyl-[protein] = N(6)-octanoyl-L-lysyl-[protein] + holo-[ACP] + H(+). It functions in the pathway protein modification; protein lipoylation via endogenous pathway; protein N(6)-(lipoyl)lysine from octanoyl-[acyl-carrier-protein]: step 1/2. Catalyzes the transfer of endogenously produced octanoic acid from octanoyl-acyl-carrier-protein onto the lipoyl domains of lipoate-dependent enzymes. Lipoyl-ACP can also act as a substrate although octanoyl-ACP is likely to be the physiological substrate. This is Octanoyltransferase from Zymomonas mobilis subsp. mobilis (strain ATCC 31821 / ZM4 / CP4).